Here is a 732-residue protein sequence, read N- to C-terminus: Asp/Glu-specific dipeptidyl-peptidase (732 aa).

Positions 1–18 are cleaved as a signal peptide; it reads MRIALVATLVLTSGIANA. Catalysis depends on charge relay system residues H80, D215, and S666.

This sequence belongs to the peptidase S46 family.

In terms of biological role, catalyzes the removal of dipeptides from the N-terminus of oligopeptides. Shows a strict specificity for acidic residues (Asp or Glu) in the P1 position, and has probably a hydrophobic residue preference at the P2 position. Preferentially cleaves the synthetic substrate Leu-Glu-methylcoumaryl-7-amide (Leu-Glu-MCA) as compared to Leu-Asp-MCA. The sequence is that of Asp/Glu-specific dipeptidyl-peptidase (dpp11) from Shewanella putrefaciens (strain CN-32 / ATCC BAA-453).